Consider the following 143-residue polypeptide: MKTGYFLLEDGNKIEFELYPEAAPGTVANFEKLANEGFYDGLTFHRVIPGFVSQGGCPHGTGTGGPGYTIKCETEGNPHTHEAGALSMAHAGKDTGGSQFFIVHEPQPHLNGVHTVFGKVTSGLEFAKNMSNGDVMKEVRVEG.

The PPIase cyclophilin-type domain maps to M1–G143.

Belongs to the cyclophilin-type PPIase family.

Its subcellular location is the cytoplasm. It carries out the reaction [protein]-peptidylproline (omega=180) = [protein]-peptidylproline (omega=0). Inhibited by cyclosporin A (CsA). In terms of biological role, PPIases accelerate the folding of proteins. It catalyzes the cis-trans isomerization of proline imidic peptide bonds in oligopeptides. This Bacillus subtilis (strain 168) protein is Peptidyl-prolyl cis-trans isomerase B (ppiB).